The primary structure comprises 260 residues: GTP cyclohydrolase FolE2 (260 aa).

It belongs to the GTP cyclohydrolase IV family.

It carries out the reaction GTP + H2O = 7,8-dihydroneopterin 3'-triphosphate + formate + H(+). It functions in the pathway cofactor biosynthesis; 7,8-dihydroneopterin triphosphate biosynthesis; 7,8-dihydroneopterin triphosphate from GTP: step 1/1. Converts GTP to 7,8-dihydroneopterin triphosphate. This chain is GTP cyclohydrolase FolE2, found in Desulfovibrio desulfuricans (strain ATCC 27774 / DSM 6949 / MB).